The chain runs to 308 residues: MRKLIVGSRRSKLALTQSQQFIDKLKFIDPSLDIEIKEIVTKGDKIVDKQLSKVGGKGLFVKEIQNELFNKEIDMAIHSLKDVPSMIPDGLTLGCIPDREIPFDAYIAKNHIPLQELSEGSIVGTSSLRRGAQILSKYPHLKIKWIRGNIDTRLKKLETEDYDAIILAAAGLKRMGWSDNIVTTYLDRDILLPAIGQGALGIECRSDDKELLDLLSKVHNHDVAQCVTAERTFLSEMDGSCQVPIGGYATIAQDNQIEFTGLIMSPDGKERYEHTALGTDPVKLGIEVSQVLKKQGAYDIIKKLNEAE.

Cys-241 is modified (S-(dipyrrolylmethanemethyl)cysteine).

It belongs to the HMBS family. As to quaternary structure, monomer. It depends on dipyrromethane as a cofactor.

The catalysed reaction is 4 porphobilinogen + H2O = hydroxymethylbilane + 4 NH4(+). It participates in porphyrin-containing compound metabolism; protoporphyrin-IX biosynthesis; coproporphyrinogen-III from 5-aminolevulinate: step 2/4. Its function is as follows. Tetrapolymerization of the monopyrrole PBG into the hydroxymethylbilane pre-uroporphyrinogen in several discrete steps. The protein is Porphobilinogen deaminase of Staphylococcus epidermidis (strain ATCC 35984 / DSM 28319 / BCRC 17069 / CCUG 31568 / BM 3577 / RP62A).